Here is a 342-residue protein sequence, read N- to C-terminus: uncharacterized protein (342 aa).

Belongs to the cycloisomerase 2 family.

This is an uncharacterized protein from Staphylococcus aureus (strain MSSA476).